Here is a 313-residue protein sequence, read N- to C-terminus: Type II methyltransferase M.NlaX (313 aa).

Residues 2-308 form the SAM-dependent MTase C5-type domain; that stretch reads FKIIDLFAGI…EQMKAALSAV (307 aa). The active site involves Cys74.

The protein belongs to the class I-like SAM-binding methyltransferase superfamily. C5-methyltransferase family.

The enzyme catalyses a 2'-deoxycytidine in DNA + S-adenosyl-L-methionine = a 5-methyl-2'-deoxycytidine in DNA + S-adenosyl-L-homocysteine + H(+). In terms of biological role, a methylase, recognizes the double-stranded sequence 5'-CCNGG-3' and methylates C-2 on both strands. May be the equivalent of dcm in this bacteria, or it may protect the DNA from cleavage by the putative NlaXP endonuclease. This chain is Type II methyltransferase M.NlaX (nlaXM), found in Neisseria lactamica.